The primary structure comprises 957 residues: Glycine dehydrogenase (decarboxylating) (957 aa).

Residue K708 is modified to N6-(pyridoxal phosphate)lysine.

The protein belongs to the GcvP family. As to quaternary structure, the glycine cleavage system is composed of four proteins: P, T, L and H. Requires pyridoxal 5'-phosphate as cofactor.

It carries out the reaction N(6)-[(R)-lipoyl]-L-lysyl-[glycine-cleavage complex H protein] + glycine + H(+) = N(6)-[(R)-S(8)-aminomethyldihydrolipoyl]-L-lysyl-[glycine-cleavage complex H protein] + CO2. In terms of biological role, the glycine cleavage system catalyzes the degradation of glycine. The P protein binds the alpha-amino group of glycine through its pyridoxal phosphate cofactor; CO(2) is released and the remaining methylamine moiety is then transferred to the lipoamide cofactor of the H protein. The protein is Glycine dehydrogenase (decarboxylating) of Salmonella paratyphi B (strain ATCC BAA-1250 / SPB7).